We begin with the raw amino-acid sequence, 256 residues long: MGASEELEYLKSLVAQLNDKIASLEAKAKGPASKTPAQQLRTILIGPPGAGKGTQAPRIRDEFCVCHLATGDMLRDQVEKKTPLGIAAKKIMDAGGLVSDDIMVNMIKDQLENNEACKNGFVLDGFPRTVPQAQKLDGMLAERKEKLDSVVQLLIDDQLLISRITGRLIHPASGRSYHKIFNPPKKAGIDDLTGEPLIQRSDDNAETLTRRLKTYHTQTGPVVDYYKAKGLWHGVDAAQSPSVVWDSMRGIFAGRK.

Position 49-54 (49-54 (GAGKGT)) interacts with ATP. An NMP region spans residues 69–98 (ATGDMLRDQVEKKTPLGIAAKKIMDAGGLV). Residues Thr70, Arg75, 96–98 (GLV), 125–128 (GFPR), and Gln132 contribute to the AMP site. Residues 166 to 203 (GRLIHPASGRSYHKIFNPPKKAGIDDLTGEPLIQRSDD) form an LID region. ATP contacts are provided by residues Arg167 and 176–177 (SY). 2 residues coordinate AMP: Arg200 and Arg211. Residue Gln239 participates in ATP binding.

Belongs to the adenylate kinase family. AK2 subfamily. In terms of assembly, monomer.

Its subcellular location is the cytoplasm. It is found in the cytosol. The protein resides in the mitochondrion intermembrane space. It catalyses the reaction AMP + ATP = 2 ADP. Functionally, catalyzes the reversible transfer of the terminal phosphate group between ATP and AMP. Plays an important role in cellular energy homeostasis and in adenine nucleotide metabolism. Adenylate kinase activity is critical for regulation of the phosphate utilization and the AMP de novo biosynthesis pathways. This is Adenylate kinase from Coprinopsis cinerea (strain Okayama-7 / 130 / ATCC MYA-4618 / FGSC 9003) (Inky cap fungus).